We begin with the raw amino-acid sequence, 194 residues long: Glycerol-3-phosphate acyltransferase (194 aa).

5 consecutive transmembrane segments (helical) span residues Ile3–Gly23, Val47–Pro67, Ile78–Leu97, Ile112–Phe132, and Leu153–Ile173.

This sequence belongs to the PlsY family. Probably interacts with PlsX.

It localises to the cell membrane. It catalyses the reaction an acyl phosphate + sn-glycerol 3-phosphate = a 1-acyl-sn-glycero-3-phosphate + phosphate. It participates in lipid metabolism; phospholipid metabolism. Its function is as follows. Catalyzes the transfer of an acyl group from acyl-phosphate (acyl-PO(4)) to glycerol-3-phosphate (G3P) to form lysophosphatidic acid (LPA). This enzyme utilizes acyl-phosphate as fatty acyl donor, but not acyl-CoA or acyl-ACP. The polypeptide is Glycerol-3-phosphate acyltransferase (Macrococcus caseolyticus (strain JCSC5402) (Macrococcoides caseolyticum)).